Reading from the N-terminus, the 120-residue chain is Large ribosomal subunit protein uL18 (120 aa).

It belongs to the universal ribosomal protein uL18 family. In terms of assembly, part of the 50S ribosomal subunit; part of the 5S rRNA/L5/L18/L25 subcomplex. Contacts the 5S and 23S rRNAs.

Its function is as follows. This is one of the proteins that bind and probably mediate the attachment of the 5S RNA into the large ribosomal subunit, where it forms part of the central protuberance. In Chloroflexus aggregans (strain MD-66 / DSM 9485), this protein is Large ribosomal subunit protein uL18.